Reading from the N-terminus, the 523-residue chain is Endoglucanase 19 (523 aa).

Residues 1 to 52 form the signal peptide; sequence MCSWSLSSHTLTSPVRQAAMEPKSSSCGGAGIRLRLLVVLHLLLLVPSSAMA. D107 functions as the Nucleophile in the catalytic mechanism. N-linked (GlcNAc...) asparagine glycosylation is present at N279. Active-site residues include H442, D493, and E502.

Belongs to the glycosyl hydrolase 9 (cellulase E) family.

It localises to the secreted. The enzyme catalyses Endohydrolysis of (1-&gt;4)-beta-D-glucosidic linkages in cellulose, lichenin and cereal beta-D-glucans.. The chain is Endoglucanase 19 from Oryza sativa subsp. japonica (Rice).